Consider the following 471-residue polypeptide: Heat shock 70 kDa protein 13 (471 aa).

The N-terminal stretch at 1 to 22 (MAGEMTILGSAVLTLLLAGYLA) is a signal peptide. A compositionally biased stretch (basic and acidic residues) spans 317-330 (DSKEPQNGDSELPK). Positions 317 to 350 (DSKEPQNGDSELPKDQLTPGDGHHVNRVFRPGLS) are disordered.

This sequence belongs to the heat shock protein 70 family. As to quaternary structure, binds UBQLN2.

It localises to the microsome. The protein localises to the endoplasmic reticulum. Has peptide-independent ATPase activity. The sequence is that of Heat shock 70 kDa protein 13 (Hspa13) from Mus musculus (Mouse).